Consider the following 216-residue polypeptide: GTPase IMAP family member GIMD1 (216 aa).

Residues K5 to K216 form the AIG1-type G domain. GTP is bound by residues G14–S22, S35, and H147–E149.

The protein belongs to the TRAFAC class TrmE-Era-EngA-EngB-Septin-like GTPase superfamily. AIG1/Toc34/Toc159-like paraseptin GTPase family. IAN subfamily.

This is GTPase IMAP family member GIMD1 (GIMD1) from Bos taurus (Bovine).